The sequence spans 270 residues: MTALTVPKKDTTALKQPSKQAEAILQAKDINIYYGENHAVKQLSLDINKNEILALIGPSGCGKSTFLRSINRMNDLIPSARVTGTLAYEGLNLLSDDVNVVALRKEIGMVFQKANPFPKSIYENLVHGLRFHNVKKKEWADIVEDSLKRAALWDEVKDRLHESALSLSGGQQQRLCIARTLALKPEVILLDEPASALDPIATAKVEELMVELKKNYTVVVVTHNMQQASRVSDRTAFFYNGELIEVNKTDVLFRNPEKKQTEDYISGRFG.

The 241-residue stretch at Leu-25 to Ile-265 folds into the ABC transporter domain. Residue Gly-57–Ser-64 coordinates ATP.

It belongs to the ABC transporter superfamily. Phosphate importer (TC 3.A.1.7) family. In terms of assembly, the complex is composed of two ATP-binding proteins (PstB), two transmembrane proteins (PstC and PstA) and a solute-binding protein (PstS).

Its subcellular location is the cell membrane. It carries out the reaction phosphate(out) + ATP + H2O = ADP + 2 phosphate(in) + H(+). In terms of biological role, part of the ABC transporter complex PstSACB involved in phosphate import. Responsible for energy coupling to the transport system. This Shouchella clausii (strain KSM-K16) (Alkalihalobacillus clausii) protein is Phosphate import ATP-binding protein PstB 2.